The sequence spans 261 residues: 3-methyl-2-oxobutanoate hydroxymethyltransferase (261 aa).

Mg(2+) contacts are provided by Asp-47 and Asp-86. 3-methyl-2-oxobutanoate contacts are provided by residues 47–48 (DS), Asp-86, and Lys-116. Position 118 (Glu-118) interacts with Mg(2+). Glu-186 (proton acceptor) is an active-site residue.

This sequence belongs to the PanB family. In terms of assembly, homodecamer; pentamer of dimers. Mg(2+) is required as a cofactor.

The protein localises to the cytoplasm. It catalyses the reaction 3-methyl-2-oxobutanoate + (6R)-5,10-methylene-5,6,7,8-tetrahydrofolate + H2O = 2-dehydropantoate + (6S)-5,6,7,8-tetrahydrofolate. It functions in the pathway cofactor biosynthesis; (R)-pantothenate biosynthesis; (R)-pantoate from 3-methyl-2-oxobutanoate: step 1/2. Catalyzes the reversible reaction in which hydroxymethyl group from 5,10-methylenetetrahydrofolate is transferred onto alpha-ketoisovalerate to form ketopantoate. The sequence is that of 3-methyl-2-oxobutanoate hydroxymethyltransferase from Thermosynechococcus vestitus (strain NIES-2133 / IAM M-273 / BP-1).